The chain runs to 446 residues: Iroquois homeobox protein 5a (446 aa).

The segment at residues 117 to 173 (NATRDATATLKAWLNEHRKNPYPTKGEKIMLAIITKMTLTQVSTWFANARRRLKKEN) is a DNA-binding region (homeobox). Positions 175-312 (MTWTPRNRSE…IHSPPSAPKP (138 aa)) are disordered. Positions 184 to 201 (EDEEEDENIDLEKNDDDE) are enriched in acidic residues. Basic and acidic residues-rich tracts occupy residues 202–220 (PNKPTDKGDSTDTEADHKL) and 227–258 (PCDRFKDETHSKDLDPPLTDSELKEAEERTDL). Polar residues-rich tracts occupy residues 264–274 (KPTTSSPSVLQ) and 293–303 (STGNSNVTSVI).

It belongs to the TALE/IRO homeobox family.

The protein resides in the nucleus. In terms of biological role, transcription factor. Binds to consensus iroquois binding site (IBS) motifs 5'-ACANNTGT-3' or 5'-ACANNNTGT-3' in regulatory elements of target genes. Required, together with irx7, for hyoid joint formation; they act cell autonomously to repress expression of cartilage matrix genes, such as collagen col2a1a, within immature chondrocytes of the joint interzone. May compete with or modify Sox9a activity, thereby reducing Sox9a-mediated activation of col2a1a. Probably acts in the developing hyoid joint downstream of Bmp signaling. In concert with irx6a, plays a role in visual performance. This chain is Iroquois homeobox protein 5a (irx5a), found in Danio rerio (Zebrafish).